Here is a 237-residue protein sequence, read N- to C-terminus: tRNA (guanine-N(7)-)-methyltransferase (237 aa).

S-adenosyl-L-methionine is bound by residues Glu67, Glu92, Asp119, and Asp142. Asp142 is a catalytic residue. Residues Lys146, Asp178, and 215-218 (TKFE) each bind substrate.

Belongs to the class I-like SAM-binding methyltransferase superfamily. TrmB family.

It catalyses the reaction guanosine(46) in tRNA + S-adenosyl-L-methionine = N(7)-methylguanosine(46) in tRNA + S-adenosyl-L-homocysteine. Its pathway is tRNA modification; N(7)-methylguanine-tRNA biosynthesis. Catalyzes the formation of N(7)-methylguanine at position 46 (m7G46) in tRNA. The sequence is that of tRNA (guanine-N(7)-)-methyltransferase from Aeromonas hydrophila subsp. hydrophila (strain ATCC 7966 / DSM 30187 / BCRC 13018 / CCUG 14551 / JCM 1027 / KCTC 2358 / NCIMB 9240 / NCTC 8049).